The following is a 354-amino-acid chain: Biotin synthase (354 aa).

The Radical SAM core domain occupies 40-258 (NEVQVSTLLS…IAVARILMPR (219 aa)). The [4Fe-4S] cluster site is built by C55, C59, and C62. 4 residues coordinate [2Fe-2S] cluster: C99, C130, C190, and R262.

It belongs to the radical SAM superfamily. Biotin synthase family. In terms of assembly, homodimer. Requires [4Fe-4S] cluster as cofactor. The cofactor is [2Fe-2S] cluster.

The enzyme catalyses (4R,5S)-dethiobiotin + (sulfur carrier)-SH + 2 reduced [2Fe-2S]-[ferredoxin] + 2 S-adenosyl-L-methionine = (sulfur carrier)-H + biotin + 2 5'-deoxyadenosine + 2 L-methionine + 2 oxidized [2Fe-2S]-[ferredoxin]. Its pathway is cofactor biosynthesis; biotin biosynthesis; biotin from 7,8-diaminononanoate: step 2/2. Its function is as follows. Catalyzes the conversion of dethiobiotin (DTB) to biotin by the insertion of a sulfur atom into dethiobiotin via a radical-based mechanism. This chain is Biotin synthase, found in Hahella chejuensis (strain KCTC 2396).